The chain runs to 362 residues: MGNRTLEGCHVDSRMDHLFPPSLYIFVIGVGLPTNCLALWAAYRQVRQRNELGVYLMNLSIADLLYICTLPLWVDYFLHHDNWIHGPGSCKLFGFIFYTNIYISIAFLCCISVDRYLAVAHPLRFARLRRVKTAVAVSSVVWATELGANSAPLFHDELFRDRYNHTFCFEKFPMEGWVAWMNLYRVFVGFLFPWALMLLSYRGILRAVRGSVSTERQEKVKIKRLALSLIAIVLVCFAPYHVLLLSRSAVYLRRPRDCGFEERVFSAYHSSLAFTSLNCVADPILYCLVNEGARSDVAKALHHLLRFLASDKPQEMANASLTLETPLTSKRNSMAKAMAAGWVAAPLAQGDQVQLKMLPPAQ.

The Extracellular portion of the chain corresponds to 1-8 (MGNRTLEG). An N-linked (GlcNAc...) asparagine glycan is attached at Asn-3. Residues 9–45 (CHVDSRMDHLFPPSLYIFVIGVGLPTNCLALWAAYRQ) traverse the membrane as a helical segment. Disulfide bonds link Cys-9/Cys-258 and Cys-90/Cys-168. At 46–49 (VRQR) the chain is on the cytoplasmic side. A helical transmembrane segment spans residues 50–80 (NELGVYLMNLSIADLLYICTLPLWVDYFLHH). The Extracellular portion of the chain corresponds to 81–85 (DNWIH). Residues 86 to 121 (GPGSCKLFGFIFYTNIYISIAFLCCISVDRYLAVAH) traverse the membrane as a helical segment. Topologically, residues 122–129 (PLRFARLR) are cytoplasmic. Residues 130–156 (RVKTAVAVSSVVWATELGANSAPLFHD) form a helical membrane-spanning segment. At 157 to 172 (ELFRDRYNHTFCFEKF) the chain is on the extracellular side. The extracellular loop 2 (ECL2) stretch occupies residues 157-172 (ELFRDRYNHTFCFEKF). An N-linked (GlcNAc...) asparagine glycan is attached at Asn-164. Residues 173 to 210 (PMEGWVAWMNLYRVFVGFLFPWALMLLSYRGILRAVRG) form a helical membrane-spanning segment. Residues 211-214 (SVST) are Cytoplasmic-facing. Residues 215–250 (ERQEKVKIKRLALSLIAIVLVCFAPYHVLLLSRSAV) traverse the membrane as a helical segment. The Extracellular portion of the chain corresponds to 251–260 (YLRRPRDCGF). A helical transmembrane segment spans residues 261–289 (EERVFSAYHSSLAFTSLNCVADPILYCLV). Topologically, residues 290–362 (NEGARSDVAK…VQLKMLPPAQ (73 aa)) are cytoplasmic.

This sequence belongs to the G-protein coupled receptor 1 family.

It localises to the cell membrane. Activated by a network of residues that connects an extracellular-facing cavity to Glu-145, a conserved charged residue buried in the transmembrane core of the receptor. Protonation likely drives conformational changes in extracellular loop 2 (ECL2), which stabilizes movement of transmembrane 3 (TM3) and a series of rearrangements that connect the extracellular-facing cavity to Glu-145, a residue only conserved in proton-sensing G-protein coupled receptors. Functionally, proton-sensing G-protein coupled receptor activated by extracellular pH, which is required to monitor pH changes and generate adaptive reactions. Activated by an optimal pH of 6.8-7.2. Ligand binding causes a conformation change that triggers signaling via guanine nucleotide-binding proteins (G proteins) and modulates the activity of downstream effectors, such as adenylate cyclase. GPR4 is mainly coupled to G(s) G proteins and mediates activation of adenylate cyclase activity. May also couple with G(q) and G(12)/G(13) G proteins. Acts as a key regulator of respiratory sensitivity to CO2/H(+) in brain retrotrapezoid nucleus neurons: acts by mediating detection of protons generated by the formation of carbonic acid in the blood, an important mechanism to impulse to breathe. Also acts as a regulator of acid secretion in the kidney collecting duct by maintaining acid-base homeostasis in the kidney. Acidosis-induced GPR4 activation increases paracellular gap formation and permeability of vascular endothelial cells, possibly through the G(12)/G(13)/Rho GTPase signaling pathway. The sequence is that of G-protein coupled receptor 4 (GPR4) from Bos taurus (Bovine).